The sequence spans 339 residues: tRNA N6-adenosine threonylcarbamoyltransferase (339 aa).

The Fe cation site is built by His-111 and His-115. Substrate contacts are provided by residues Leu-139–Gly-143, Asp-172, Gly-185, Asp-189, and Asn-280. Asp-308 serves as a coordination point for Fe cation.

Belongs to the KAE1 / TsaD family. It depends on Fe(2+) as a cofactor.

Its subcellular location is the cytoplasm. It carries out the reaction L-threonylcarbamoyladenylate + adenosine(37) in tRNA = N(6)-L-threonylcarbamoyladenosine(37) in tRNA + AMP + H(+). Functionally, required for the formation of a threonylcarbamoyl group on adenosine at position 37 (t(6)A37) in tRNAs that read codons beginning with adenine. Is involved in the transfer of the threonylcarbamoyl moiety of threonylcarbamoyl-AMP (TC-AMP) to the N6 group of A37, together with TsaE and TsaB. TsaD likely plays a direct catalytic role in this reaction. The chain is tRNA N6-adenosine threonylcarbamoyltransferase from Bacteroides fragilis (strain ATCC 25285 / DSM 2151 / CCUG 4856 / JCM 11019 / LMG 10263 / NCTC 9343 / Onslow / VPI 2553 / EN-2).